We begin with the raw amino-acid sequence, 918 residues long: uncharacterized protein (918 aa).

Disordered stretches follow at residues 66-150, 226-283, 326-481, 515-548, 594-707, 737-774, and 800-918; these read AMVH…SSYG, GADG…NADF, ADGT…EFGN, ALEK…GSNL, EITH…NAVK, NHSN…SHLT, and HITH…IIQM. Positions 79-89 are enriched in low complexity; that stretch reads QSSGSSSNTHS. Residues 103-127 show a composition bias toward basic and acidic residues; the sequence is NSEKKDGYNKESKVDEANENTKIKS. The segment covering 270-281 has biased composition (low complexity); sequence SKKAASASGSNA. Composition is skewed to polar residues over residues 326–354, 363–372, and 379–404; these read ADGT…SSDL, KSHSTSNKTD, and ANQS…SSIE. The segment covering 430–441 has biased composition (low complexity); it reads SSSHSKSASGTS. Positions 515–533 are enriched in basic and acidic residues; the sequence is ALEKNHEKNSDGTFKDESK. Polar residues-rich tracts occupy residues 534-545 and 604-619; these read GSNSRVNRTDGG and VAAS…TSMS. Low complexity predominate over residues 632 to 647; the sequence is SSQAADSHDAISASSD. Residues 648–660 are compositionally biased toward basic and acidic residues; the sequence is VDAKIVKHADRSE. The segment covering 661 to 672 has biased composition (polar residues); the sequence is SISNDSSNQTAS. Residues 673–688 are compositionally biased toward basic and acidic residues; the sequence is EHNDSSKQSEHEKRQN. Positions 689-702 are enriched in polar residues; sequence ADGSFSDVSSNSAK. 4 stretches are compositionally biased toward basic and acidic residues: residues 738–765, 800–814, 830–846, and 883–918; these read HSND…DAKH, HITH…DAGH, EGFK…EGAQ, and LAKD…IIQM.

This is an uncharacterized protein from Caenorhabditis elegans.